Reading from the N-terminus, the 459-residue chain is tRNA-2-methylthio-N(6)-dimethylallyladenosine synthase (459 aa).

An MTTase N-terminal domain is found at 1-116 (MRAHLITYGC…IGKALETNER (116 aa)). Residues C10, C46, C79, C148, C152, and C155 each contribute to the [4Fe-4S] cluster site. One can recognise a Radical SAM core domain in the interval 134–367 (PQGKLQAHLT…IAKQKEWSAR (234 aa)). One can recognise a TRAM domain in the interval 370–433 (AAKVGTIQEV…PHMLYGRLIG (64 aa)).

This sequence belongs to the methylthiotransferase family. MiaB subfamily. In terms of assembly, monomer. [4Fe-4S] cluster is required as a cofactor.

The protein localises to the cytoplasm. The catalysed reaction is N(6)-dimethylallyladenosine(37) in tRNA + (sulfur carrier)-SH + AH2 + 2 S-adenosyl-L-methionine = 2-methylsulfanyl-N(6)-dimethylallyladenosine(37) in tRNA + (sulfur carrier)-H + 5'-deoxyadenosine + L-methionine + A + S-adenosyl-L-homocysteine + 2 H(+). Functionally, catalyzes the methylthiolation of N6-(dimethylallyl)adenosine (i(6)A), leading to the formation of 2-methylthio-N6-(dimethylallyl)adenosine (ms(2)i(6)A) at position 37 in tRNAs that read codons beginning with uridine. This Deinococcus geothermalis (strain DSM 11300 / CIP 105573 / AG-3a) protein is tRNA-2-methylthio-N(6)-dimethylallyladenosine synthase.